Here is a 273-residue protein sequence, read N- to C-terminus: 1,4-dihydroxy-2-naphthoyl-CoA synthase (273 aa).

Residues R34, 73–77, Y85, 117–121, T143, S149, Y246, and K261 contribute to the substrate site; these read SGGDQ and YAVGG. 142–144 is a hydrogencarbonate binding site; that stretch reads QTG. Residues 254-265 show a composition bias toward basic and acidic residues; sequence GRDAFKEKRDPD. The disordered stretch occupies residues 254–273; it reads GRDAFKEKRDPDFDQFPKFP.

This sequence belongs to the enoyl-CoA hydratase/isomerase family. MenB subfamily. Hydrogencarbonate is required as a cofactor.

The catalysed reaction is 2-succinylbenzoyl-CoA + H(+) = 1,4-dihydroxy-2-naphthoyl-CoA + H2O. The protein operates within quinol/quinone metabolism; 1,4-dihydroxy-2-naphthoate biosynthesis; 1,4-dihydroxy-2-naphthoate from chorismate: step 6/7. It functions in the pathway quinol/quinone metabolism; menaquinone biosynthesis. Its function is as follows. Converts o-succinylbenzoyl-CoA (OSB-CoA) to 1,4-dihydroxy-2-naphthoyl-CoA (DHNA-CoA). This chain is 1,4-dihydroxy-2-naphthoyl-CoA synthase, found in Staphylococcus aureus (strain Mu50 / ATCC 700699).